The chain runs to 380 residues: Flap endonuclease 1 (380 aa).

The N-domain stretch occupies residues 1–104 (MGIKGLSQLI…GELTKRAEKR (104 aa)). Aspartate 34 contacts Mg(2+). DNA is bound by residues arginine 47 and arginine 70. 5 residues coordinate Mg(2+): aspartate 86, glutamate 158, glutamate 160, aspartate 179, and aspartate 181. Residues 122 to 253 (DIDKFNRRLV…KKAVELINKH (132 aa)) are I-domain. Glutamate 158 is a DNA binding site. Glycine 231 and aspartate 233 together coordinate DNA. Mg(2+) is bound at residue aspartate 233. The tract at residues 336-344 (TQGRLDSFF) is interaction with PCNA. A disordered region spans residues 342–380 (SFFKVLPSTPNPKRKIEDKKTPASKKAKTTGGKPGRKPK). The segment covering 363-380 (PASKKAKTTGGKPGRKPK) has biased composition (basic residues).

This sequence belongs to the XPG/RAD2 endonuclease family. FEN1 subfamily. As to quaternary structure, interacts with PCNA. Three molecules of FEN1 bind to one PCNA trimer with each molecule binding to one PCNA monomer. PCNA stimulates the nuclease activity without altering cleavage specificity. It depends on Mg(2+) as a cofactor. Phosphorylated. Phosphorylation upon DNA damage induces relocalization to the nuclear plasma.

It localises to the nucleus. The protein localises to the nucleolus. The protein resides in the nucleoplasm. It is found in the mitochondrion. Functionally, structure-specific nuclease with 5'-flap endonuclease and 5'-3' exonuclease activities involved in DNA replication and repair. During DNA replication, cleaves the 5'-overhanging flap structure that is generated by displacement synthesis when DNA polymerase encounters the 5'-end of a downstream Okazaki fragment. It enters the flap from the 5'-end and then tracks to cleave the flap base, leaving a nick for ligation. Also involved in the long patch base excision repair (LP-BER) pathway, by cleaving within the apurinic/apyrimidinic (AP) site-terminated flap. Acts as a genome stabilization factor that prevents flaps from equilibrating into structures that lead to duplications and deletions. Also possesses 5'-3' exonuclease activity on nicked or gapped double-stranded DNA, and exhibits RNase H activity. Also involved in replication and repair of rDNA and in repairing mitochondrial DNA. The chain is Flap endonuclease 1 from Aedes aegypti (Yellowfever mosquito).